Reading from the N-terminus, the 342-residue chain is Probable RNA methyltransferase PST_2231 (342 aa).

Glutamate 91 serves as the catalytic Proton acceptor. The 227-residue stretch at 94–320 (LLPRDGLCVS…TKVRNSAGQD (227 aa)) folds into the Radical SAM core domain. A disulfide bond links cysteine 101 and cysteine 325. Residues cysteine 108, cysteine 112, and cysteine 115 each contribute to the [4Fe-4S] cluster site. S-adenosyl-L-methionine contacts are provided by residues 153–154 (GE), serine 183, 206–208 (SLH), and asparagine 282. The S-methylcysteine intermediate role is filled by cysteine 325.

This sequence belongs to the radical SAM superfamily. RlmN family. Requires [4Fe-4S] cluster as cofactor.

It localises to the cytoplasm. This Stutzerimonas stutzeri (strain A1501) (Pseudomonas stutzeri) protein is Probable RNA methyltransferase PST_2231.